The primary structure comprises 444 residues: Phosphomethylpyrimidine synthase (444 aa).

Substrate-binding positions include asparagine 80, methionine 109, tyrosine 138, histidine 174, 194–196, 235–238, and glutamate 274; these read SRG and DSLR. Histidine 278 is a binding site for Zn(2+). A substrate-binding site is contributed by tyrosine 301. Histidine 342 serves as a coordination point for Zn(2+). Cysteine 422, cysteine 425, and cysteine 430 together coordinate [4Fe-4S] cluster.

It belongs to the ThiC family. As to quaternary structure, homodimer. The cofactor is [4Fe-4S] cluster.

The enzyme catalyses 5-amino-1-(5-phospho-beta-D-ribosyl)imidazole + S-adenosyl-L-methionine = 4-amino-2-methyl-5-(phosphooxymethyl)pyrimidine + CO + 5'-deoxyadenosine + formate + L-methionine + 3 H(+). The protein operates within cofactor biosynthesis; thiamine diphosphate biosynthesis. Functionally, catalyzes the synthesis of the hydroxymethylpyrimidine phosphate (HMP-P) moiety of thiamine from aminoimidazole ribotide (AIR) in a radical S-adenosyl-L-methionine (SAM)-dependent reaction. This chain is Phosphomethylpyrimidine synthase, found in Nitratiruptor sp. (strain SB155-2).